We begin with the raw amino-acid sequence, 348 residues long: GMP reductase 2 (348 aa).

Residues 26–27 (SR), K78, 129–131 (DVA), and 180–181 (IG) contribute to the NADP(+) site. The K(+) site is built by G181, G183, and C186. C186 (thioimidate intermediate) is an active-site residue. The Proton donor/acceptor role is filled by T188. R189 is a K(+) binding site. GMP is bound by residues 219–221 (DGG), 242–243 (GG), 268–270 (GMS), and 286–290 (RASEG). Residues M269 and 285 to 286 (YR) contribute to the NADP(+) site. An N6-acetyllysine modification is found at K291. 314 to 317 (STCT) contacts NADP(+).

Belongs to the IMPDH/GMPR family. GuaC type 1 subfamily. As to quaternary structure, homotetramer.

The catalysed reaction is IMP + NH4(+) + NADP(+) = GMP + NADPH + 2 H(+). Its function is as follows. Catalyzes the irreversible NADPH-dependent deamination of GMP to IMP. It functions in the conversion of nucleobase, nucleoside and nucleotide derivatives of G to A nucleotides, and in maintaining the intracellular balance of A and G nucleotides. Plays a role in modulating cellular differentiation. This is GMP reductase 2 from Mus musculus (Mouse).